The chain runs to 270 residues: Large ribosomal subunit protein bL21m (270 aa).

A mitochondrion-targeting transit peptide spans 1-68 (MASLRCFREL…HWYRSQDRCF (68 aa)). The tract at residues 68 to 113 (FSSNTKDTDEDEESSEGEDDDEEEGEDFEDSADMEVEREYSPAEKV) is disordered. Acidic residues predominate over residues 75–101 (TDEDEESSEGEDDDEEEGEDFEDSADM). Residues 102–113 (EVEREYSPAEKV) show a composition bias toward basic and acidic residues.

Belongs to the bacterial ribosomal protein bL21 family. As to quaternary structure, component of the mitochondrial ribosome large subunit. In terms of tissue distribution, constitutively expressed in roots, stems, leaves, flowers, pistils and siliques.

The protein resides in the mitochondrion. In terms of biological role, this protein binds to 23S ribosomal RNA in the presence of protein L20. Required for karyogamy during female gametophyte development, when the two polar nuclei fuse to form the diploid central cell nucleus, and during double fertilization of the egg cell and the central cell. The sequence is that of Large ribosomal subunit protein bL21m from Arabidopsis thaliana (Mouse-ear cress).